A 1112-amino-acid polypeptide reads, in one-letter code: Mediator of RNA polymerase II transcription subunit 14 (1112 aa).

3 disordered regions span residues M1 to S76, S120 to E141, and T1088 to D1112. Over residues S20–D39 the composition is skewed to polar residues. The segment covering I64 to I73 has biased composition (basic and acidic residues). A compositionally biased stretch (polar residues) spans T1088–C1099.

This sequence belongs to the Mediator complex subunit 14 family. In terms of assembly, component of the Mediator complex.

It localises to the nucleus. Component of the Mediator complex, a coactivator involved in the regulated transcription of nearly all RNA polymerase II-dependent genes. Mediator functions as a bridge to convey information from gene-specific regulatory proteins to the basal RNA polymerase II transcription machinery. Mediator is recruited to promoters by direct interactions with regulatory proteins and serves as a scaffold for the assembly of a functional preinitiation complex with RNA polymerase II and the general transcription factors. This chain is Mediator of RNA polymerase II transcription subunit 14 (rgr1), found in Aspergillus clavatus (strain ATCC 1007 / CBS 513.65 / DSM 816 / NCTC 3887 / NRRL 1 / QM 1276 / 107).